An 85-amino-acid chain; its full sequence is Alpha-defensin 11 (85 aa).

The N-terminal stretch at 1 to 11 (ALVLLAFQVQA) is a signal peptide. Positions 12–50 (DPIQNTDEETKTEEQPGEEDQAVSVSFGDPEGTSLQEES) are excised as a propeptide. The tract at residues 14–46 (IQNTDEETKTEEQPGEEDQAVSVSFGDPEGTSL) is disordered. 3 cysteine pairs are disulfide-bonded: Cys-56–Cys-84, Cys-58–Cys-73, and Cys-63–Cys-83.

It belongs to the alpha-defensin family. Paneth cells of the small bowel.

The protein localises to the secreted. Functionally, probably contributes to the antimicrobial barrier function of the small bowel mucosa. The polypeptide is Alpha-defensin 11 (Defa11) (Mus musculus (Mouse)).